Reading from the N-terminus, the 351-residue chain is Photosystem II D2 protein (351 aa).

Residues 39-59 (TAYLAAGGWMTGTTFVTSWYT) form a helical membrane-spanning segment. Histidine 116 contacts chlorophyll a. Residues 123–139 (GFCLRQFEIARLVGIRP) traverse the membrane as a helical segment. Residues glutamine 128 and asparagine 141 each contribute to the pheophytin a site. The helical transmembrane segment at 151–164 (VFVSVFLLYPLGQA) threads the bilayer. Residue histidine 196 coordinates chlorophyll a. A helical transmembrane segment spans residues 206 to 226 (GALLCAIHGATVENTLFEDGD). A plastoquinone is bound by residues histidine 213 and phenylalanine 260. Histidine 213 is a Fe cation binding site. Histidine 267 contributes to the Fe cation binding site. A helical transmembrane segment spans residues 277–293 (GLWTSAIGIVGLALNLR).

The protein belongs to the reaction center PufL/M/PsbA/D family. In terms of assembly, PSII is composed of 1 copy each of membrane proteins PsbA, PsbB, PsbC, PsbD, PsbE, PsbF, PsbH, PsbI, PsbJ, PsbK, PsbL, PsbM, PsbT, PsbX, PsbY, PsbZ, Psb30/Ycf12, at least 3 peripheral proteins of the oxygen-evolving complex and a large number of cofactors. It forms dimeric complexes. The cofactor is The D1/D2 heterodimer binds P680, chlorophylls that are the primary electron donor of PSII, and subsequent electron acceptors. It shares a non-heme iron and each subunit binds pheophytin, quinone, additional chlorophylls, carotenoids and lipids. There is also a Cl(-1) ion associated with D1 and D2, which is required for oxygen evolution. The PSII complex binds additional chlorophylls, carotenoids and specific lipids..

It is found in the plastid. Its subcellular location is the chloroplast thylakoid membrane. The enzyme catalyses 2 a plastoquinone + 4 hnu + 2 H2O = 2 a plastoquinol + O2. Functionally, photosystem II (PSII) is a light-driven water:plastoquinone oxidoreductase that uses light energy to abstract electrons from H(2)O, generating O(2) and a proton gradient subsequently used for ATP formation. It consists of a core antenna complex that captures photons, and an electron transfer chain that converts photonic excitation into a charge separation. The D1/D2 (PsbA/PsbD) reaction center heterodimer binds P680, the primary electron donor of PSII as well as several subsequent electron acceptors. D2 is needed for assembly of a stable PSII complex. This chain is Photosystem II D2 protein, found in Trieres chinensis (Marine centric diatom).